A 406-amino-acid polypeptide reads, in one-letter code: Phosphorylase b kinase gamma catalytic chain, liver/testis isoform (406 aa).

Positions 24–291 constitute a Protein kinase domain; the sequence is YDPKDIIGRG…AEQALQHPFF (268 aa). ATP is bound by residues 30–38 and K53; that span reads IGRGVSSVV. D153 functions as the Proton acceptor in the catalytic mechanism. The interval 306-330 is calmodulin-binding (domain-N); the sequence is QRFRVAVWTILAAGRVALSSHRLRP. The segment at 346 to 370 is calmodulin-binding (domain-C); it reads VRRLIDNCAFRLYGHWVKKGEQQNR.

The protein belongs to the protein kinase superfamily. CAMK Ser/Thr protein kinase family. As to quaternary structure, hexadecamer of 4 heterotetramers, each composed of alpha, beta, gamma, and delta subunits. Alpha (PHKA1 or PHKA2) and beta (PHKB) are regulatory subunits, gamma (PHKG1 or PHKG2) is the catalytic subunit, and delta is calmodulin.

It carries out the reaction 2 ATP + phosphorylase b = 2 ADP + phosphorylase a.. In terms of biological role, catalytic subunit of the phosphorylase b kinase (PHK), which mediates the neural and hormonal regulation of glycogen breakdown (glycogenolysis) by phosphorylating and thereby activating glycogen phosphorylase. May regulate glycogeneolysis in the testis. In vitro, phosphorylates PYGM. This is Phosphorylase b kinase gamma catalytic chain, liver/testis isoform (Phkg2) from Rattus norvegicus (Rat).